The following is a 513-amino-acid chain: GMP synthase [glutamine-hydrolyzing] (513 aa).

One can recognise a Glutamine amidotransferase type-1 domain in the interval 8 to 198 (MILVLDFGSQ…VFGVCECEGE (191 aa)). C85 serves as the catalytic Nucleophile. Active-site residues include H172 and E174. The region spanning 199–388 (WSMENFIEIE…LGIPDEIVWR (190 aa)) is the GMPS ATP-PPase domain. 227 to 233 (GGVDSSV) is a binding site for ATP.

Homodimer.

The enzyme catalyses XMP + L-glutamine + ATP + H2O = GMP + L-glutamate + AMP + diphosphate + 2 H(+). It participates in purine metabolism; GMP biosynthesis; GMP from XMP (L-Gln route): step 1/1. In terms of biological role, catalyzes the synthesis of GMP from XMP. This Bacillus subtilis (strain 168) protein is GMP synthase [glutamine-hydrolyzing] (guaA).